The sequence spans 81 residues: Trefoil factor 3 (81 aa).

An N-terminal signal peptide occupies residues 1 to 22 (METRALWLMLLVVLVAGSSGIA). Positions 31 to 74 (SQCMVPANVRVDCGYPSVTSEQCNNRGCCFDSSIPNVPWCFKPL) constitute a P-type domain. Intrachain disulfides connect cysteine 33–cysteine 59, cysteine 43–cysteine 58, and cysteine 53–cysteine 70.

Monomer. Homodimer; disulfide-linked. As to expression, expressed in goblet cells of the intestines and colon (at protein level). Expressed abundantly in goblet cells of intestine and colon, and at low levels in stomach. No expression in brain, lung, spleen, kidney, uterus, pancreas, liver, heart or thymus.

The protein localises to the secreted. It localises to the extracellular space. Its subcellular location is the extracellular matrix. The protein resides in the cytoplasm. In terms of biological role, involved in the maintenance and repair of the intestinal mucosa. Promotes the mobility of epithelial cells in healing processes (motogen). This chain is Trefoil factor 3 (Tff3), found in Mus musculus (Mouse).